The sequence spans 544 residues: Chaperonin GroEL (544 aa).

Residues 29–32 (TLGP), 86–90 (DGTTT), Gly413, 476–478 (NAA), and Asp492 contribute to the ATP site.

This sequence belongs to the chaperonin (HSP60) family. Forms a cylinder of 14 subunits composed of two heptameric rings stacked back-to-back. Interacts with the co-chaperonin GroES.

It is found in the cytoplasm. The enzyme catalyses ATP + H2O + a folded polypeptide = ADP + phosphate + an unfolded polypeptide.. Together with its co-chaperonin GroES, plays an essential role in assisting protein folding. The GroEL-GroES system forms a nano-cage that allows encapsulation of the non-native substrate proteins and provides a physical environment optimized to promote and accelerate protein folding. The protein is Chaperonin GroEL of Bacillus anthracis (strain A0248).